The sequence spans 231 residues: Large ribosomal subunit protein uL1 (231 aa).

This sequence belongs to the universal ribosomal protein uL1 family. As to quaternary structure, part of the 50S ribosomal subunit.

In terms of biological role, binds directly to 23S rRNA. The L1 stalk is quite mobile in the ribosome, and is involved in E site tRNA release. Functionally, protein L1 is also a translational repressor protein, it controls the translation of the L11 operon by binding to its mRNA. This chain is Large ribosomal subunit protein uL1, found in Caldanaerobacter subterraneus subsp. tengcongensis (strain DSM 15242 / JCM 11007 / NBRC 100824 / MB4) (Thermoanaerobacter tengcongensis).